Here is a 1200-residue protein sequence, read N- to C-terminus: Hyalin (1200 aa).

HYR domains are found at residues 1–39, 40–123, 124–207, 208–292, 293–376, 377–460, 461–544, 546–629, 630–713, 714–797, 798–881, 882–966, 967–1050, 1051–1133, and 1134–1200; these read SSHN…TVTA, TDTT…NVIE, VDTT…NVIE, VDTT…NVVE, VDTT…TVEE, VDTT…TVIA, VDTT…TISA, VDTT…VINA, VDTT…TIGT, VDTM…TVFA, VDTT…TVTA, QDTT…TVNT, and QDTT…FFSD.

As to quaternary structure, homooligomer in presence of calcium. In terms of processing, glycosylated.

It localises to the secreted. Its subcellular location is the extracellular space. It is found in the extracellular matrix. Functionally, major constituent of the hyaline layer. The hyaline layer of echinoderm embryos is an extraembryonic matrix that functions as a substrate for cell adhesion through early development. This is Hyalin from Strongylocentrotus purpuratus (Purple sea urchin).